Consider the following 582-residue polypeptide: Solute carrier family 15 member 3 (582 aa).

Residues 1-20 (MSALRAEQQPSRSGERQPLV) are disordered. The next 4 helical transmembrane spans lie at 33–53 (TAAAAVLLVEMLERAAFFGVT), 77–97 (LLFLGASYLLAPVGGWLADVY), 102–122 (LAISLSLLLYLAATGLLLTTI), and 155–175 (PYCATTLYLVLLLLALAASSV). Asn-178 carries an N-linked (GlcNAc...) asparagine glycan. The helical transmembrane segment at 201–221 (WFYWSINLGAILSLLVVAFIE) threads the bilayer. N-linked (GlcNAc...) asparagine glycosylation is present at Asn-223. The next 2 helical transmembrane spans lie at 232 to 252 (IIVGLVGLAFFIFLIATPVFI) and 312 to 332 (FQVLLKVLPVMVTLVPYWMVY). Asn-357 carries N-linked (GlcNAc...) asparagine glycosylation. A run of 2 helical transmembrane segments spans residues 371 to 391 (IPEAWLLLANVAVILILVPVK) and 409 to 429 (LQKMALGMFFGFTSIIVAGVL). Asn-440 carries N-linked (GlcNAc...) asparagine glycosylation. Helical transmembrane passes span 466–485 (YLLIGISEIFASIPGLEFAY), 498–518 (GIFFCLSGVGSLLGSGLVALL), and 541–561 (LYFFLLAGIQAVTAVLFLWIA). Asn-575 is a glycosylation site (N-linked (GlcNAc...) asparagine).

It belongs to the major facilitator superfamily. Proton-dependent oligopeptide transporter (POT/PTR) (TC 2.A.17) family. Abundant expression in lung, spleen and thymus, and detected faintly in brain, liver, adrenal gland and heart at protein level.

The protein localises to the lysosome membrane. The protein resides in the endosome membrane. The enzyme catalyses N-acetyl-D-muramoyl-L-alanyl-D-isoglutamine(out) + n H(+)(out) = N-acetyl-D-muramoyl-L-alanyl-D-isoglutamine(in) + n H(+)(in). The catalysed reaction is glycylglycylglycine(out) + n H(+)(out) = glycylglycylglycine(in) + n H(+)(in). It catalyses the reaction carnosine(out) + n H(+)(out) = carnosine(in) + n H(+)(in). It carries out the reaction L-histidine(out) + n H(+)(out) = L-histidine(in) + n H(+)(in). In terms of biological role, proton-coupled amino-acid transporter that transports free histidine and certain di- and tripeptides, and is involved in innate immune response. Also able to transport carnosine. Involved in the detection of microbial pathogens by toll-like receptors (TLRs) and NOD-like receptors (NLRs), probably by mediating transport of bacterial peptidoglycans across the endolysosomal membrane: catalyzes the transport of certain bacterial peptidoglycans, such as muramyl dipeptide (MDP), the NOD2 ligand. This is Solute carrier family 15 member 3 (Slc15a3) from Rattus norvegicus (Rat).